The primary structure comprises 502 residues: Large ribosomal subunit protein uL2m (502 aa).

Positions 458-502 (AMNPVDHPHGGGEGRTKGGRPSVSPWGKPTKAGFRAGVGVGKRRI) are disordered. The segment covering 463 to 473 (DHPHGGGEGRT) has biased composition (basic and acidic residues). Positions 493–502 (AGVGVGKRRI) are enriched in gly residues.

This sequence belongs to the universal ribosomal protein uL2 family.

It is found in the mitochondrion. The chain is Large ribosomal subunit protein uL2m (RPL2) from Oryza sativa (Rice).